Here is a 450-residue protein sequence, read N- to C-terminus: Tubulin beta-1 chain (450 aa).

GTP contacts are provided by Gln-11, Glu-69, Ser-138, Gly-142, Thr-143, Gly-144, Asn-204, and Asn-226. Glu-69 is a binding site for Mg(2+). The interval Gln-426 to Ile-450 is disordered. Residues Thr-429–Glu-444 show a composition bias toward acidic residues.

This sequence belongs to the tubulin family. In terms of assembly, dimer of alpha and beta chains. A typical microtubule is a hollow water-filled tube with an outer diameter of 25 nm and an inner diameter of 15 nM. Alpha-beta heterodimers associate head-to-tail to form protofilaments running lengthwise along the microtubule wall with the beta-tubulin subunit facing the microtubule plus end conferring a structural polarity. Microtubules usually have 13 protofilaments but different protofilament numbers can be found in some organisms and specialized cells. Mg(2+) serves as cofactor.

Its subcellular location is the cytoplasm. It localises to the cytoskeleton. Functionally, tubulin is the major constituent of microtubules, a cylinder consisting of laterally associated linear protofilaments composed of alpha- and beta-tubulin heterodimers. Microtubules grow by the addition of GTP-tubulin dimers to the microtubule end, where a stabilizing cap forms. Below the cap, tubulin dimers are in GDP-bound state, owing to GTPase activity of alpha-tubulin. This Pisum sativum (Garden pea) protein is Tubulin beta-1 chain (TUBB1).